A 1108-amino-acid chain; its full sequence is Probable arabinosyltransferase A (1108 aa).

A run of 13 helical transmembrane segments spans residues 12 to 34, 204 to 223, 258 to 280, 334 to 356, 368 to 387, 397 to 414, 421 to 443, 463 to 482, 531 to 553, 582 to 604, 616 to 638, 653 to 675, and 696 to 718; these read IPRS…VPLL, IVMV…LAVL, VGLA…HVVG, VWMR…HWVL, ANRV…WLPF, IALG…AIAL, AVAV…AVAA, GLLA…LVVV, FAVL…RGHV, WAVQ…AFAC, TLYV…GWFY, IASH…LAAW, and VLAS…ASLT. A disordered region spans residues 804 to 825; that stretch reads PGLVNSDASPNKPNVAYSDSAG.

Belongs to the emb family.

The protein resides in the cell membrane. Arabinosyl transferase responsible for the polymerization of arabinose into the arabinan of arabinogalactan. The sequence is that of Probable arabinosyltransferase A (embA) from Mycobacterium avium.